The following is a 502-amino-acid chain: MLKEFKEQRLKEIQELRSMGIEPYPYKFEKELTAREIREKYDYLQAGEVLESEKLSFAGRVMSIRHHGKTAFFHMKDDTGRIQAYIKADSVGKEKMDLFKRHVKIGDFVGVRGFPFKSKTGELTIYVQEYTLLSKALRPLPEKWHGIKDKEIIYRQRYLELIVNDEAIERFKKRFKAVRVIREFLNSRGFIEVETPILHYVTGGAEARPFVTHLNVFDIDMYLRIAPELYLKRLIVGGFEKIYEIGKNFRNEGISYKHSPEFTSIEIYQAYADYNDMMDLTEELIVEVVKRTCGTLKISYQGKEIDFTPPWKRVRMRDFLKEKLGVDILEDPDEVLLKKLEEHGVELEIKNRAHLIDKLRDLVEEELVNPTFIIDHPVVISPLAKRHREDPRLTERFELIIFGREIANAFSELNDPVDQYQRFLEQAKMREEGDEEAHMMDLDFVRALEYGMPPTGGLGIGLDRLFMFITDSPTIRDVIPFPIVKPKKFEEEEAEFEGGFEE.

Residues E398 and E405 each coordinate Mg(2+).

Belongs to the class-II aminoacyl-tRNA synthetase family. Homodimer. The cofactor is Mg(2+).

Its subcellular location is the cytoplasm. It catalyses the reaction tRNA(Lys) + L-lysine + ATP = L-lysyl-tRNA(Lys) + AMP + diphosphate. The protein is Lysine--tRNA ligase (lysS) of Thermotoga maritima (strain ATCC 43589 / DSM 3109 / JCM 10099 / NBRC 100826 / MSB8).